A 157-amino-acid chain; its full sequence is SsrA-binding protein (157 aa).

Belongs to the SmpB family.

It is found in the cytoplasm. Functionally, required for rescue of stalled ribosomes mediated by trans-translation. Binds to transfer-messenger RNA (tmRNA), required for stable association of tmRNA with ribosomes. tmRNA and SmpB together mimic tRNA shape, replacing the anticodon stem-loop with SmpB. tmRNA is encoded by the ssrA gene; the 2 termini fold to resemble tRNA(Ala) and it encodes a 'tag peptide', a short internal open reading frame. During trans-translation Ala-aminoacylated tmRNA acts like a tRNA, entering the A-site of stalled ribosomes, displacing the stalled mRNA. The ribosome then switches to translate the ORF on the tmRNA; the nascent peptide is terminated with the 'tag peptide' encoded by the tmRNA and targeted for degradation. The ribosome is freed to recommence translation, which seems to be the essential function of trans-translation. The polypeptide is SsrA-binding protein (Levilactobacillus brevis (strain ATCC 367 / BCRC 12310 / CIP 105137 / JCM 1170 / LMG 11437 / NCIMB 947 / NCTC 947) (Lactobacillus brevis)).